We begin with the raw amino-acid sequence, 692 residues long: uncharacterized protein (692 aa).

Response regulatory domains follow at residues 9-130 and 139-255; these read RVLY…LRMC and RILI…EYRM. Residues Asp58 and Asp188 each carry the 4-aspartylphosphate modification. Residues 299–432 form the GGDEF domain; that stretch reads GVHGLVIIDV…GGNQAHVWSA (134 aa). The region spanning 443–691 is the EAL domain; that stretch reads ESVIKRLVST…SFDFQHMSHD (249 aa).

This is an uncharacterized protein from Thiocystis violacea.